The sequence spans 86 residues: Thioredoxin (86 aa).

Residues Cys15 and Cys18 each act as nucleophile in the active site. Cysteines 15 and 18 form a disulfide.

This sequence belongs to the glutaredoxin family.

Does not function as a glutathione-disulfide oxidoreductase in the presence of glutathione and glutathione reductase. Has low thioredoxin activity in vitro. The chain is Thioredoxin from Methanocaldococcus jannaschii (strain ATCC 43067 / DSM 2661 / JAL-1 / JCM 10045 / NBRC 100440) (Methanococcus jannaschii).